An 89-amino-acid polypeptide reads, in one-letter code: Large ribosomal subunit protein eL34 (89 aa).

Residues 1–32 (MPAPRFKSGSFKKISKRGPGNKTLTHHRRSKV) are disordered.

It belongs to the eukaryotic ribosomal protein eL34 family.

The polypeptide is Large ribosomal subunit protein eL34 (Methanococcus aeolicus (strain ATCC BAA-1280 / DSM 17508 / OCM 812 / Nankai-3)).